A 601-amino-acid polypeptide reads, in one-letter code: MDWGTELWDQFEVLERHTQWGLDLLDRYVKFVKERTEVEQAYAKQLRSLVKKYLPKRPAKDDPESKFSQQQSFVQILQEVNDFAGQRELVAENLSVRVCLELTKYSQEMKQERKMHFQEGRRAQQQLENGFKQLENSKRKFERDCREAEKAAQTAERLDQDINATKADVEKAKQQAHLRSHMAEESKNEYAAQLQRFNRDQAHFYFSQMPQIFDKLQDMDERRATRLGAGYGLLSEAELEVVPIIAKCLEGMKVAANAVDPKNDSQVLIELHKSGFARPGDVEFEDFSQPMNRAPSDSSLGTPSDGRPELRGPGRSRTKRWPFGKKNKPRPPPLSPLGGPVPSALPNGPPSPRSGRDPLAILSEISKSVKPRLASFRSLRGSRGTVVTEDFSHLPPEQQRKRLQQQLEERSRELQKEVDQREALKKMKDVYEKTPQMGDPASLEPQITETLSNIERLKLEVQKYEAWLAEAESRVLSNRGDSLSRHARPPDPPTSAPPDSSSNSASQDTKESSEEPPSEESQDTPIYTEFDEDFEEEPTSPIGHCVAIYHFEGSSEGTISMAEGEDLSLMEEDKGDGWTRVRRKEGGEGYVPTSYLRVTLN.

Residues 1 to 117 are required for translocation to the plasma membrane in response to insulin, podosome formation and interaction with AKAP9 and microtubules; that stretch reads MDWGTELWDQ…EMKQERKMHF (117 aa). The F-BAR domain occupies 1–264; sequence MDWGTELWDQ…AANAVDPKND (264 aa). Residues 67–259 are a coiled coil; that stretch reads FSQQQSFVQI…EGMKVAANAV (193 aa). Disordered stretches follow at residues 280-358, 390-420, and 478-543; these read GDVE…GRDP, DFSH…EVDQ, and NRGD…SPIG. A compositionally biased stretch (polar residues) spans 289-302; the sequence is QPMNRAPSDSSLGT. The segment at 293–537 is interaction with CDC42; it reads RAPSDSSLGT…TEFDEDFEEE (245 aa). The interaction with PDE6G stretch occupies residues 293–601; sequence RAPSDSSLGT…PTSYLRVTLN (309 aa). 3 positions are modified to phosphoserine: Ser-296, Ser-298, and Ser-299. The segment covering 314–329 has biased composition (basic residues); it reads GRSRTKRWPFGKKNKP. Ser-335 is subject to Phosphoserine. Low complexity predominate over residues 336–346; it reads PLGGPVPSALP. Ser-351 bears the Phosphoserine mark. Residues 388–481 adopt a coiled-coil conformation; sequence TEDFSHLPPE…ESRVLSNRGD (94 aa). Positions 393–470 constitute an REM-1 domain; that stretch reads HLPPEQQRKR…VQKYEAWLAE (78 aa). Over residues 407–420 the composition is skewed to basic and acidic residues; sequence LEERSRELQKEVDQ. The segment at 471-601 is required for interaction with FASLG and localization to lysosomes; it reads AESRVLSNRG…PTSYLRVTLN (131 aa). At Ser-482 the chain carries Phosphoserine. The interaction with DNM2 and WASL stretch occupies residues 487-541; that stretch reads ARPPDPPTSAPPDSSSNSASQDTKESSEEPPSEESQDTPIYTEFDEDFEEEPTSP. Over residues 497–506 the composition is skewed to low complexity; the sequence is PPDSSSNSAS. A compositionally biased stretch (acidic residues) spans 529–538; that stretch reads EFDEDFEEEP. Residues 529–601 are interaction with DNM1 and WASL; the sequence is EFDEDFEEEP…PTSYLRVTLN (73 aa). Residues 538–601 form a required for podosome formation region; sequence PTSPIGHCVA…PTSYLRVTLN (64 aa). The SH3 domain maps to 540–601; the sequence is SPIGHCVAIY…PTSYLRVTLN (62 aa). The interaction with WAS stretch occupies residues 544-601; that stretch reads HCVAIYHFEGSSEGTISMAEGEDLSLMEEDKGDGWTRVRRKEGGEGYVPTSYLRVTLN. The segment at 546–601 is interaction with ARHGAP17, DAAM1, DIAPH1 and DIAPH2; the sequence is VAIYHFEGSSEGTISMAEGEDLSLMEEDKGDGWTRVRRKEGGEGYVPTSYLRVTLN.

Belongs to the FNBP1 family. In terms of assembly, homodimerizes, the dimers can polymerize end-to-end to form filamentous structures. Interacts with AKAP9, ARHGAP17, DAAM1, DIAPH1, DIAPH2, DNM1, FASLG/FASL, GAPVD1, LYN, microtubules, PDE6G, SRC and WAS/WASP. Interacts with the ligand binding domain of the thyroid receptor (TR) in the presence of thyroid hormone. May interact with CTNNB1 and HD/HTT. Interacts specifically with GTP-bound CDC42 and RHOQ. Interacts with DNM2 and WASL. Tyrosine phosphorylated. Also phosphorylated by PKA.

The protein resides in the cytoplasm. Its subcellular location is the cytoskeleton. The protein localises to the cell cortex. It localises to the lysosome. It is found in the golgi apparatus. The protein resides in the cell membrane. Its subcellular location is the cell projection. The protein localises to the phagocytic cup. Its function is as follows. Required to coordinate membrane tubulation with reorganization of the actin cytoskeleton during endocytosis. Also acts as a link between CDC42 signaling and regulation of the actin cytoskeleton. Binds to lipids such as phosphatidylinositol 4,5-bisphosphate and phosphatidylserine and promotes membrane invagination and the formation of tubules. Also enhances actin polymerization in the vicinity of membrane tubules by recruiting WASL/N-WASP which in turn activates the Arp2/3 complex. Actin polymerization and dynamin may promote the fission of membrane tubules to form endocytic vesicles. Required for the formation of podosomes, actin-rich adhesion structures specific to monocyte-derived cells. Required for translocation of GLUT4 to the plasma membrane in response to insulin signaling. May be required for the lysosomal retention of FASLG/FASL. The polypeptide is Cdc42-interacting protein 4 (TRIP10) (Pongo abelii (Sumatran orangutan)).